We begin with the raw amino-acid sequence, 118 residues long: Large ribosomal subunit protein uL24 (118 aa).

It belongs to the universal ribosomal protein uL24 family. As to quaternary structure, part of the 50S ribosomal subunit.

Functionally, one of two assembly initiator proteins, it binds directly to the 5'-end of the 23S rRNA, where it nucleates assembly of the 50S subunit. Its function is as follows. One of the proteins that surrounds the polypeptide exit tunnel on the outside of the subunit. This is Large ribosomal subunit protein uL24 from Parasynechococcus marenigrum (strain WH8102).